Consider the following 432-residue polypeptide: Aspartate aminotransferase (432 aa).

45-46 (RG) is a binding site for substrate. Position 109-111 (109-111 (SSL)) interacts with pyridoxal 5'-phosphate. 148–150 (YDR) serves as a coordination point for substrate. Pyridoxal 5'-phosphate-binding positions include asparagine 197, tyrosine 229, and 262–265 (STSK). Residue arginine 400 participates in substrate binding.

It belongs to the class-I pyridoxal-phosphate-dependent aminotransferase family. In terms of assembly, homodimer. It depends on pyridoxal 5'-phosphate as a cofactor.

It catalyses the reaction L-aspartate + 2-oxoglutarate = oxaloacetate + L-glutamate. This is Aspartate aminotransferase from Corynebacterium glutamicum (strain ATCC 13032 / DSM 20300 / JCM 1318 / BCRC 11384 / CCUG 27702 / LMG 3730 / NBRC 12168 / NCIMB 10025 / NRRL B-2784 / 534).